We begin with the raw amino-acid sequence, 874 residues long: Alanine--tRNA ligase (874 aa).

Positions 562, 566, 664, and 668 each coordinate Zn(2+).

It belongs to the class-II aminoacyl-tRNA synthetase family. It depends on Zn(2+) as a cofactor.

It localises to the cytoplasm. It carries out the reaction tRNA(Ala) + L-alanine + ATP = L-alanyl-tRNA(Ala) + AMP + diphosphate. Catalyzes the attachment of alanine to tRNA(Ala) in a two-step reaction: alanine is first activated by ATP to form Ala-AMP and then transferred to the acceptor end of tRNA(Ala). Also edits incorrectly charged Ser-tRNA(Ala) and Gly-tRNA(Ala) via its editing domain. This Shewanella sp. (strain ANA-3) protein is Alanine--tRNA ligase.